A 196-amino-acid polypeptide reads, in one-letter code: ATP-dependent Clp protease proteolytic subunit (196 aa).

The active-site Nucleophile is Ser-101. The active site involves His-126.

It belongs to the peptidase S14 family. Component of the chloroplastic Clp protease core complex.

The protein resides in the plastid. The protein localises to the chloroplast stroma. It carries out the reaction Hydrolysis of proteins to small peptides in the presence of ATP and magnesium. alpha-casein is the usual test substrate. In the absence of ATP, only oligopeptides shorter than five residues are hydrolyzed (such as succinyl-Leu-Tyr-|-NHMec, and Leu-Tyr-Leu-|-Tyr-Trp, in which cleavage of the -Tyr-|-Leu- and -Tyr-|-Trp bonds also occurs).. In terms of biological role, cleaves peptides in various proteins in a process that requires ATP hydrolysis. Has a chymotrypsin-like activity. Plays a major role in the degradation of misfolded proteins. The chain is ATP-dependent Clp protease proteolytic subunit from Coffea arabica (Arabian coffee).